The sequence spans 278 residues: Ribosomal RNA small subunit methyltransferase A (278 aa).

Positions 28, 30, 55, 77, 103, and 122 each coordinate S-adenosyl-L-methionine.

The protein belongs to the class I-like SAM-binding methyltransferase superfamily. rRNA adenine N(6)-methyltransferase family. RsmA subfamily.

Its subcellular location is the cytoplasm. It catalyses the reaction adenosine(1518)/adenosine(1519) in 16S rRNA + 4 S-adenosyl-L-methionine = N(6)-dimethyladenosine(1518)/N(6)-dimethyladenosine(1519) in 16S rRNA + 4 S-adenosyl-L-homocysteine + 4 H(+). Specifically dimethylates two adjacent adenosines (A1518 and A1519) in the loop of a conserved hairpin near the 3'-end of 16S rRNA in the 30S particle. May play a critical role in biogenesis of 30S subunits. The polypeptide is Ribosomal RNA small subunit methyltransferase A (Cereibacter sphaeroides (strain ATCC 17029 / ATH 2.4.9) (Rhodobacter sphaeroides)).